We begin with the raw amino-acid sequence, 396 residues long: 4-hydroxy-3-methylbut-2-en-1-yl diphosphate synthase (ferredoxin) (396 aa).

[4Fe-4S] cluster is bound by residues Cys305, Cys308, Cys339, and Glu346.

Belongs to the IspG family. [4Fe-4S] cluster serves as cofactor.

The enzyme catalyses (2E)-4-hydroxy-3-methylbut-2-enyl diphosphate + 2 oxidized [2Fe-2S]-[ferredoxin] + H2O = 2-C-methyl-D-erythritol 2,4-cyclic diphosphate + 2 reduced [2Fe-2S]-[ferredoxin] + H(+). The protein operates within isoprenoid biosynthesis; isopentenyl diphosphate biosynthesis via DXP pathway; isopentenyl diphosphate from 1-deoxy-D-xylulose 5-phosphate: step 5/6. Functionally, converts 2C-methyl-D-erythritol 2,4-cyclodiphosphate (ME-2,4cPP) into 1-hydroxy-2-methyl-2-(E)-butenyl 4-diphosphate. The chain is 4-hydroxy-3-methylbut-2-en-1-yl diphosphate synthase (ferredoxin) from Gloeobacter violaceus (strain ATCC 29082 / PCC 7421).